Consider the following 256-residue polypeptide: Imidazole glycerol phosphate synthase subunit HisF (256 aa).

Catalysis depends on residues aspartate 11 and aspartate 130.

It belongs to the HisA/HisF family. Heterodimer of HisH and HisF.

The protein localises to the cytoplasm. The enzyme catalyses 5-[(5-phospho-1-deoxy-D-ribulos-1-ylimino)methylamino]-1-(5-phospho-beta-D-ribosyl)imidazole-4-carboxamide + L-glutamine = D-erythro-1-(imidazol-4-yl)glycerol 3-phosphate + 5-amino-1-(5-phospho-beta-D-ribosyl)imidazole-4-carboxamide + L-glutamate + H(+). It functions in the pathway amino-acid biosynthesis; L-histidine biosynthesis; L-histidine from 5-phospho-alpha-D-ribose 1-diphosphate: step 5/9. IGPS catalyzes the conversion of PRFAR and glutamine to IGP, AICAR and glutamate. The HisF subunit catalyzes the cyclization activity that produces IGP and AICAR from PRFAR using the ammonia provided by the HisH subunit. The protein is Imidazole glycerol phosphate synthase subunit HisF of Cupriavidus metallidurans (strain ATCC 43123 / DSM 2839 / NBRC 102507 / CH34) (Ralstonia metallidurans).